Consider the following 119-residue polypeptide: Immunoglobulin heavy variable 2-26 (119 aa).

The first 19 residues, 1 to 19 (MDTLCYTLLLLTTPSWVLS), serve as a signal peptide directing secretion. Gln-20 carries the post-translational modification Pyrrolidone carboxylic acid. The segment at 20–44 (QVTLKESGPVLVKPTETLTLTCTVS) is framework-1. The 100-residue stretch at 20–119 (QVTLKESGPV…DTATYYCARI (100 aa)) folds into the Ig-like domain. Cys-41 and Cys-116 form a disulfide bridge. The complementarity-determining-1 stretch occupies residues 45–54 (GFSLSNARMG). Positions 55-71 (VSWIRQPPGKALEWLAH) are framework-2. A complementarity-determining-2 region spans residues 72–78 (IFSNDEK). The interval 79–116 (SYSTSLKSRLTISKDTSKSQVVLTMTNMDPVDTATYYC) is framework-3. The complementarity-determining-3 stretch occupies residues 117-119 (ARI).

Immunoglobulins are composed of two identical heavy chains and two identical light chains; disulfide-linked.

The protein resides in the secreted. It localises to the cell membrane. Functionally, v region of the variable domain of immunoglobulin heavy chains that participates in the antigen recognition. Immunoglobulins, also known as antibodies, are membrane-bound or secreted glycoproteins produced by B lymphocytes. In the recognition phase of humoral immunity, the membrane-bound immunoglobulins serve as receptors which, upon binding of a specific antigen, trigger the clonal expansion and differentiation of B lymphocytes into immunoglobulins-secreting plasma cells. Secreted immunoglobulins mediate the effector phase of humoral immunity, which results in the elimination of bound antigens. The antigen binding site is formed by the variable domain of one heavy chain, together with that of its associated light chain. Thus, each immunoglobulin has two antigen binding sites with remarkable affinity for a particular antigen. The variable domains are assembled by a process called V-(D)-J rearrangement and can then be subjected to somatic hypermutations which, after exposure to antigen and selection, allow affinity maturation for a particular antigen. This chain is Immunoglobulin heavy variable 2-26, found in Homo sapiens (Human).